The chain runs to 205 residues: Sarcosine oxidase subunit gamma (205 aa).

The protein belongs to the SoxG family. Heterotetramer composed of subunits alpha (SoxA), beta (SoxB), gamma (SoxG) and delta (SoxD).

The protein localises to the cytoplasm. It catalyses the reaction sarcosine + (6S)-5,6,7,8-tetrahydrofolate + O2 = (6R)-5,10-methylene-5,6,7,8-tetrahydrofolate + glycine + H2O2. The catalysed reaction is sarcosine + O2 + H2O = formaldehyde + glycine + H2O2. With respect to regulation, inhibited by Zn(2+), Cu(2+), Cd(2+), Hg(2+), Ag(+), p-chloromercuribenzoate (p-CMB), iodoacetamide, N-ethylmaleimide, CN(-), o-phenanthroline and sodium lauryl sulfate. In the presence of tetrahydrofolate, catalyzes the oxidative demethylation of sarcosine to yield glycine, 5,10-methylenetetrahydrofolate and hydrogen peroxide. In the absence of tetrahydrofolate, catalyzes the oxidative demethylation of sarcosine to yield glycine, formaldehyde and hydrogen peroxide. Can also use N-methyl-L-alanine and N-ethyl-L-glycine. Is very specific for oxygen as an acceptor. This is Sarcosine oxidase subunit gamma from Corynebacterium sp. (strain U-96).